The chain runs to 257 residues: Thiazole synthase (257 aa).

Lys-96 functions as the Schiff-base intermediate with DXP in the catalytic mechanism. 1-deoxy-D-xylulose 5-phosphate contacts are provided by residues Gly-157, 184-185 (AG), and 206-207 (NT).

This sequence belongs to the ThiG family. As to quaternary structure, homotetramer. Forms heterodimers with either ThiH or ThiS.

Its subcellular location is the cytoplasm. It carries out the reaction [ThiS sulfur-carrier protein]-C-terminal-Gly-aminoethanethioate + 2-iminoacetate + 1-deoxy-D-xylulose 5-phosphate = [ThiS sulfur-carrier protein]-C-terminal Gly-Gly + 2-[(2R,5Z)-2-carboxy-4-methylthiazol-5(2H)-ylidene]ethyl phosphate + 2 H2O + H(+). It participates in cofactor biosynthesis; thiamine diphosphate biosynthesis. In terms of biological role, catalyzes the rearrangement of 1-deoxy-D-xylulose 5-phosphate (DXP) to produce the thiazole phosphate moiety of thiamine. Sulfur is provided by the thiocarboxylate moiety of the carrier protein ThiS. In vitro, sulfur can be provided by H(2)S. This Rhizobium etli (strain ATCC 51251 / DSM 11541 / JCM 21823 / NBRC 15573 / CFN 42) protein is Thiazole synthase.